Consider the following 388-residue polypeptide: Dual-specificity RNA methyltransferase RlmN (388 aa).

Glu-109 functions as the Proton acceptor in the catalytic mechanism. The Radical SAM core domain occupies 115–354 (EEDRATLCVS…TIVRKTRGDD (240 aa)). Residues Cys-122 and Cys-359 are joined by a disulfide bond. [4Fe-4S] cluster is bound by residues Cys-129, Cys-133, and Cys-136. S-adenosyl-L-methionine-binding positions include 183 to 184 (GE), Ser-215, 237 to 239 (SLH), and Asn-316. Cys-359 acts as the S-methylcysteine intermediate in catalysis.

Belongs to the radical SAM superfamily. RlmN family. Requires [4Fe-4S] cluster as cofactor.

Its subcellular location is the cytoplasm. The catalysed reaction is adenosine(2503) in 23S rRNA + 2 reduced [2Fe-2S]-[ferredoxin] + 2 S-adenosyl-L-methionine = 2-methyladenosine(2503) in 23S rRNA + 5'-deoxyadenosine + L-methionine + 2 oxidized [2Fe-2S]-[ferredoxin] + S-adenosyl-L-homocysteine. It catalyses the reaction adenosine(37) in tRNA + 2 reduced [2Fe-2S]-[ferredoxin] + 2 S-adenosyl-L-methionine = 2-methyladenosine(37) in tRNA + 5'-deoxyadenosine + L-methionine + 2 oxidized [2Fe-2S]-[ferredoxin] + S-adenosyl-L-homocysteine. In terms of biological role, specifically methylates position 2 of adenine 2503 in 23S rRNA and position 2 of adenine 37 in tRNAs. m2A2503 modification seems to play a crucial role in the proofreading step occurring at the peptidyl transferase center and thus would serve to optimize ribosomal fidelity. The chain is Dual-specificity RNA methyltransferase RlmN from Klebsiella pneumoniae subsp. pneumoniae (strain ATCC 700721 / MGH 78578).